The sequence spans 984 residues: DNA polymerase (984 aa).

A bipartite nuclear localization signal region spans residues D804–T827. The segment at C939–D948 is monopartite nuclear localization signal. A disordered region spans residues R943 to Q969. A compositionally biased stretch (acidic residues) spans D947 to N966.

It belongs to the DNA polymerase type-B family.

The protein localises to the host nucleus. It carries out the reaction DNA(n) + a 2'-deoxyribonucleoside 5'-triphosphate = DNA(n+1) + diphosphate. Replicates the viral genome, host DNA polymerases cannot substitute for the viral enzyme in this process. The sequence is that of DNA polymerase (POL) from Autographa californica nuclear polyhedrosis virus (AcMNPV).